The sequence spans 227 residues: Cytochrome c oxidase subunit 2 (227 aa).

Residues M1–S14 are Mitochondrial intermembrane-facing. A helical membrane pass occupies residues P15–M45. Over L46 to Q59 the chain is Mitochondrial matrix. The chain crosses the membrane as a helical span at residues E60–M87. Topologically, residues D88–I227 are mitochondrial intermembrane. Cu cation contacts are provided by H161, C196, E198, C200, H204, and M207. E198 is a Mg(2+) binding site.

Belongs to the cytochrome c oxidase subunit 2 family. Component of the cytochrome c oxidase (complex IV, CIV), a multisubunit enzyme composed of 14 subunits. The complex is composed of a catalytic core of 3 subunits MT-CO1, MT-CO2 and MT-CO3, encoded in the mitochondrial DNA, and 11 supernumerary subunits COX4I, COX5A, COX5B, COX6A, COX6B, COX6C, COX7A, COX7B, COX7C, COX8 and NDUFA4, which are encoded in the nuclear genome. The complex exists as a monomer or a dimer and forms supercomplexes (SCs) in the inner mitochondrial membrane with NADH-ubiquinone oxidoreductase (complex I, CI) and ubiquinol-cytochrome c oxidoreductase (cytochrome b-c1 complex, complex III, CIII), resulting in different assemblies (supercomplex SCI(1)III(2)IV(1) and megacomplex MCI(2)III(2)IV(2)). Found in a complex with TMEM177, COA6, COX18, COX20, SCO1 and SCO2. Interacts with TMEM177 in a COX20-dependent manner. Interacts with COX20. Interacts with COX16. Cu cation serves as cofactor.

The protein localises to the mitochondrion inner membrane. The enzyme catalyses 4 Fe(II)-[cytochrome c] + O2 + 8 H(+)(in) = 4 Fe(III)-[cytochrome c] + 2 H2O + 4 H(+)(out). Functionally, component of the cytochrome c oxidase, the last enzyme in the mitochondrial electron transport chain which drives oxidative phosphorylation. The respiratory chain contains 3 multisubunit complexes succinate dehydrogenase (complex II, CII), ubiquinol-cytochrome c oxidoreductase (cytochrome b-c1 complex, complex III, CIII) and cytochrome c oxidase (complex IV, CIV), that cooperate to transfer electrons derived from NADH and succinate to molecular oxygen, creating an electrochemical gradient over the inner membrane that drives transmembrane transport and the ATP synthase. Cytochrome c oxidase is the component of the respiratory chain that catalyzes the reduction of oxygen to water. Electrons originating from reduced cytochrome c in the intermembrane space (IMS) are transferred via the dinuclear copper A center (CU(A)) of subunit 2 and heme A of subunit 1 to the active site in subunit 1, a binuclear center (BNC) formed by heme A3 and copper B (CU(B)). The BNC reduces molecular oxygen to 2 water molecules using 4 electrons from cytochrome c in the IMS and 4 protons from the mitochondrial matrix. This chain is Cytochrome c oxidase subunit 2 (MT-CO2), found in Niviventer culturatus (Oldfield white-bellied rat).